We begin with the raw amino-acid sequence, 859 residues long: DNA mismatch repair protein MutS (859 aa).

617–624 contacts ATP; that stretch reads GPNMGGKS. The tract at residues 799–821 is disordered; it reads ETTSLPHEQPRAKPGKPAVPQQS.

The protein belongs to the DNA mismatch repair MutS family.

This protein is involved in the repair of mismatches in DNA. It is possible that it carries out the mismatch recognition step. This protein has a weak ATPase activity. The chain is DNA mismatch repair protein MutS from Pseudomonas savastanoi pv. phaseolicola (strain 1448A / Race 6) (Pseudomonas syringae pv. phaseolicola (strain 1448A / Race 6)).